We begin with the raw amino-acid sequence, 73 residues long: Sec-independent protein translocase protein TatA (73 aa).

Residues 1–21 traverse the membrane as a helical segment; that stretch reads MGSFSIWHWMIVLVIVLLVFG.

It belongs to the TatA/E family. The Tat system comprises two distinct complexes: a TatABC complex, containing multiple copies of TatA, TatB and TatC subunits, and a separate TatA complex, containing only TatA subunits. Substrates initially bind to the TatABC complex, which probably triggers association of the separate TatA complex to form the active translocon.

It localises to the cell inner membrane. Functionally, part of the twin-arginine translocation (Tat) system that transports large folded proteins containing a characteristic twin-arginine motif in their signal peptide across membranes. TatA could form the protein-conducting channel of the Tat system. This is Sec-independent protein translocase protein TatA from Mesorhizobium japonicum (strain LMG 29417 / CECT 9101 / MAFF 303099) (Mesorhizobium loti (strain MAFF 303099)).